Consider the following 218-residue polypeptide: Cytochrome b6 (218 aa).

A helical membrane pass occupies residues 35-55 (IFYCLGGITLVCFLIQFATGF). Position 38 (cysteine 38) interacts with heme c. The heme b site is built by histidine 89 and histidine 103. Transmembrane regions (helical) follow at residues 93 to 113 (ASMM…TGGF), 119 to 139 (LTWV…VTGY), and 189 to 209 (LHTF…FLMI). 2 residues coordinate heme b: histidine 190 and histidine 205.

Belongs to the cytochrome b family. PetB subfamily. In terms of assembly, the 4 large subunits of the cytochrome b6-f complex are cytochrome b6, subunit IV (17 kDa polypeptide, PetD), cytochrome f and the Rieske protein, while the 4 small subunits are PetG, PetL, PetM and PetN. The complex functions as a dimer. Requires heme b as cofactor. Heme c serves as cofactor.

The protein localises to the cellular thylakoid membrane. Its function is as follows. Component of the cytochrome b6-f complex, which mediates electron transfer between photosystem II (PSII) and photosystem I (PSI), cyclic electron flow around PSI, and state transitions. The protein is Cytochrome b6 of Synechococcus sp. (strain CC9902).